The following is a 121-amino-acid chain: Ribosome-binding factor A (121 aa).

Belongs to the RbfA family. Monomer. Binds 30S ribosomal subunits, but not 50S ribosomal subunits or 70S ribosomes.

It is found in the cytoplasm. Functionally, one of several proteins that assist in the late maturation steps of the functional core of the 30S ribosomal subunit. Associates with free 30S ribosomal subunits (but not with 30S subunits that are part of 70S ribosomes or polysomes). Required for efficient processing of 16S rRNA. May interact with the 5'-terminal helix region of 16S rRNA. The polypeptide is Ribosome-binding factor A (Lactobacillus helveticus (strain DPC 4571)).